The sequence spans 310 residues: Ribose-phosphate pyrophosphokinase (310 aa).

ATP is bound by residues 33 to 35 (DGE) and 92 to 93 (RQ). Residues histidine 127 and aspartate 166 each contribute to the Mg(2+) site. Lysine 189 is an active-site residue. Residues arginine 191, aspartate 215, and 219-223 (DTAGT) each bind D-ribose 5-phosphate.

Belongs to the ribose-phosphate pyrophosphokinase family. Class I subfamily. As to quaternary structure, homohexamer. Requires Mg(2+) as cofactor.

The protein localises to the cytoplasm. The catalysed reaction is D-ribose 5-phosphate + ATP = 5-phospho-alpha-D-ribose 1-diphosphate + AMP + H(+). The protein operates within metabolic intermediate biosynthesis; 5-phospho-alpha-D-ribose 1-diphosphate biosynthesis; 5-phospho-alpha-D-ribose 1-diphosphate from D-ribose 5-phosphate (route I): step 1/1. Functionally, involved in the biosynthesis of the central metabolite phospho-alpha-D-ribosyl-1-pyrophosphate (PRPP) via the transfer of pyrophosphoryl group from ATP to 1-hydroxyl of ribose-5-phosphate (Rib-5-P). In Bordetella pertussis (strain Tohama I / ATCC BAA-589 / NCTC 13251), this protein is Ribose-phosphate pyrophosphokinase.